The primary structure comprises 248 residues: tRNA (guanine-N(1)-)-methyltransferase (248 aa).

Residues glycine 113 and 133–138 each bind S-adenosyl-L-methionine; that span reads IGDYVL. The tract at residues 226–248 is disordered; the sequence is ARPAQTIRAKGESQKTPKNKTDG. Positions 234 to 248 are enriched in basic and acidic residues; it reads AKGESQKTPKNKTDG.

This sequence belongs to the RNA methyltransferase TrmD family. In terms of assembly, homodimer.

It is found in the cytoplasm. The catalysed reaction is guanosine(37) in tRNA + S-adenosyl-L-methionine = N(1)-methylguanosine(37) in tRNA + S-adenosyl-L-homocysteine + H(+). Its function is as follows. Specifically methylates guanosine-37 in various tRNAs. This chain is tRNA (guanine-N(1)-)-methyltransferase, found in Rhodopseudomonas palustris (strain ATCC BAA-98 / CGA009).